We begin with the raw amino-acid sequence, 572 residues long: Excitatory amino acid transporter 2 (572 aa).

Residues 1-11 show a composition bias toward polar residues; it reads MASTEGANNMP. The segment at 1-28 is disordered; that stretch reads MASTEGANNMPKQVEVRMHDSHLSSDEP. At 1–44 the chain is on the cytoplasmic side; it reads MASTEGANNMPKQVEVRMHDSHLSSDEPKHRNLGMRMCDKLGKN. A phosphoserine mark is found at serine 3, serine 21, serine 24, and serine 25. The segment covering 14 to 28 has biased composition (basic and acidic residues); sequence VEVRMHDSHLSSDEP. The S-palmitoyl cysteine moiety is linked to residue cysteine 38. 3 consecutive transmembrane segments (helical) span residues 45–64, 88–108, and 121–142; these read LLLS…GGLL, MLKM…LSGL, and MVYY…VLAI. 2 N-linked (GlcNAc...) asparagine glycosylation sites follow: asparagine 205 and asparagine 215. Helical transmembrane passes span 235–258, 268–295, and 317–338; these read FKDG…MGKM, FFNI…ACLI, and ITVI…YFVV. The discontinuously helical intramembrane region spans 344–374; that stretch reads FSFFAGIFQAWITALGTASSAGTLPVTFRCL. L-aspartate is bound at residue 361–363; that stretch reads ASS. Residues 384-410 form a helical membrane-spanning segment; sequence VTRFVLPVGATINMDGTALYEAVAAIF. The Na(+) site is built by glycine 392, threonine 394, and asparagine 396. L-aspartate contacts are provided by residues threonine 400, 441–445, aspartate 474, and asparagine 481; that span reads IPSAG. The segment at residues 424-457 is an intramembrane region (discontinuously helical); it reads IVTVSLTATLASIGAASIPSAGLVTMLLILTAVG. A helical membrane pass occupies residues 471-492; it reads WLLDRMRTSVNVVGDSFGAGIV. Residues asparagine 481 and aspartate 485 each coordinate Na(+). 4 positions are modified to phosphoserine: serine 505, serine 520, serine 530, and serine 532. Position 537 is a phosphotyrosine (tyrosine 537). Serine 542, serine 558, and serine 562 each carry phosphoserine.

This sequence belongs to the dicarboxylate/amino acid:cation symporter (DAACS) (TC 2.A.23) family. SLC1A2 subfamily. As to quaternary structure, homotrimer. Interacts with AJUBA. In terms of processing, glycosylated. Palmitoylation at Cys-38 is not required for correct subcellular localization, but is important for glutamate uptake activity. In terms of tissue distribution, detected in brain. Detected in embryonic forebrain, especially in globus pallidus, perirhinal cortex, lateral hypothalamus, hippocampus, and on fimbria and axonal pathways connecting the neocortex, basal ganglia and thalamus (at protein level). Isoform GLT1 is expressed in the brain. Isoforms GLT-1A and GLT-1B are expressed in the liver.

The protein localises to the cell membrane. It carries out the reaction K(+)(in) + L-glutamate(out) + 3 Na(+)(out) + H(+)(out) = K(+)(out) + L-glutamate(in) + 3 Na(+)(in) + H(+)(in). It catalyses the reaction K(+)(in) + L-aspartate(out) + 3 Na(+)(out) + H(+)(out) = K(+)(out) + L-aspartate(in) + 3 Na(+)(in) + H(+)(in). The enzyme catalyses D-aspartate(out) + K(+)(in) + 3 Na(+)(out) + H(+)(out) = D-aspartate(in) + K(+)(out) + 3 Na(+)(in) + H(+)(in). Its function is as follows. Sodium-dependent, high-affinity amino acid transporter that mediates the uptake of L-glutamate and also L-aspartate and D-aspartate. Functions as a symporter that transports one amino acid molecule together with two or three Na(+) ions and one proton, in parallel with the counter-transport of one K(+) ion. Mediates Cl(-) flux that is not coupled to amino acid transport; this avoids the accumulation of negative charges due to aspartate and Na(+) symport. Essential for the rapid removal of released glutamate from the synaptic cleft, and for terminating the postsynaptic action of glutamate. The protein is Excitatory amino acid transporter 2 (Slc1a2) of Mus musculus (Mouse).